We begin with the raw amino-acid sequence, 395 residues long: MQFVDEASIIVEAGKGGNGCLSFRREKYVPKGGPDGGDGGHGGSVYLIGDESLNTLIDFKYQRFYKAPNGQPGQGRQMSGRNGEDLHVKVPVGTTVIDEDTLEVIADVTEAGQVVLVAQAGRRGLGNIHFKSSTNRAPRKTTPGTEGERRNLRFEMKVMADVGLLGVPNAGKSTLIRAVSAAKPKVANYPFTTLVPNLGVVKLGTHEHFVMADVPGLIEGASDGAGLGLRFLKHLTRTRLLLHVVDVAPFDESDPVDSARAIAHELEQFSATLAERPRWLVLNKLDLLPEEERPSTVDDIVERLAWSGPVYKISAISGDGTQALVQAAHRWLTEQRQLEAEDETAFEHEREMRRRMEDEAVARAEARMSRKRKPAEDDDDDFDEDDYDVEVEYAP.

One can recognise an Obg domain in the interval 1 to 159; it reads MQFVDEASII…RNLRFEMKVM (159 aa). Positions 128–147 are disordered; it reads IHFKSSTNRAPRKTTPGTEG. One can recognise an OBG-type G domain in the interval 160–333; sequence ADVGLLGVPN…LVQAAHRWLT (174 aa). Residues 166–173, 191–195, 213–216, 283–286, and 314–316 contribute to the GTP site; these read GVPNAGKS, FTTLV, DVPG, NKLD, and SAI. Mg(2+)-binding residues include serine 173 and threonine 193. Over residues 340–368 the composition is skewed to basic and acidic residues; the sequence is AEDETAFEHEREMRRRMEDEAVARAEARM. Positions 340–395 are disordered; the sequence is AEDETAFEHEREMRRRMEDEAVARAEARMSRKRKPAEDDDDDFDEDDYDVEVEYAP. Positions 376–395 are enriched in acidic residues; it reads EDDDDDFDEDDYDVEVEYAP.

This sequence belongs to the TRAFAC class OBG-HflX-like GTPase superfamily. OBG GTPase family. Monomer. Requires Mg(2+) as cofactor.

It is found in the cytoplasm. Functionally, an essential GTPase which binds GTP, GDP and possibly (p)ppGpp with moderate affinity, with high nucleotide exchange rates and a fairly low GTP hydrolysis rate. Plays a role in control of the cell cycle, stress response, ribosome biogenesis and in those bacteria that undergo differentiation, in morphogenesis control. The polypeptide is GTPase Obg (Chromohalobacter salexigens (strain ATCC BAA-138 / DSM 3043 / CIP 106854 / NCIMB 13768 / 1H11)).